Reading from the N-terminus, the 359-residue chain is Putative B3 domain-containing protein At3g24850 (359 aa).

2 disordered regions span residues Asp92 to Ser111 and Glu159 to Gly192. A compositionally biased stretch (polar residues) spans Thr100–Ser111. A DNA-binding region (TF-B3) is located at residues Phe250–Ser351.

The protein resides in the nucleus. The protein is Putative B3 domain-containing protein At3g24850 of Arabidopsis thaliana (Mouse-ear cress).